A 410-amino-acid polypeptide reads, in one-letter code: ORC1-type DNA replication protein 2 (410 aa).

ATP contacts are provided by residues 60-65 (GIGKTT), Y213, and R225.

Belongs to the CDC6/cdc18 family.

Its function is as follows. Involved in regulation of DNA replication. Binds DNA. The polypeptide is ORC1-type DNA replication protein 2 (orc2) (Aeropyrum pernix (strain ATCC 700893 / DSM 11879 / JCM 9820 / NBRC 100138 / K1)).